A 390-amino-acid chain; its full sequence is Glutamyl-tRNA reductase (390 aa).

Residues 46–49, S96, 101–103, and Q107 each bind substrate; these read TCNR and EAQ. C47 functions as the Nucleophile in the catalytic mechanism. 176-181 contacts NADP(+); sequence GAGEMA.

This sequence belongs to the glutamyl-tRNA reductase family. As to quaternary structure, homodimer.

It carries out the reaction (S)-4-amino-5-oxopentanoate + tRNA(Glu) + NADP(+) = L-glutamyl-tRNA(Glu) + NADPH + H(+). Its pathway is porphyrin-containing compound metabolism; protoporphyrin-IX biosynthesis; 5-aminolevulinate from L-glutamyl-tRNA(Glu): step 1/2. Its function is as follows. Catalyzes the NADPH-dependent reduction of glutamyl-tRNA(Glu) to glutamate 1-semialdehyde (GSA). This Thermus thermophilus (strain ATCC BAA-163 / DSM 7039 / HB27) protein is Glutamyl-tRNA reductase.